Consider the following 712-residue polypeptide: DNA topoisomerase 3 (712 aa).

The 134-residue stretch at 2–135 folds into the Toprim domain; the sequence is KSLIIAEKPS…TKRLWISSVT (134 aa). Mg(2+) contacts are provided by glutamate 8 and aspartate 104. The 430-residue stretch at 152 to 581 folds into the Topo IA-type catalytic domain; it reads FNNLYHAALA…EMKAFTNQVV (430 aa). The tract at residues 186-191 is interaction with DNA; that stretch reads SLGRVQ. Tyrosine 305 functions as the O-(5'-phospho-DNA)-tyrosine intermediate in the catalytic mechanism.

Belongs to the type IA topoisomerase family. Mg(2+) is required as a cofactor.

The catalysed reaction is ATP-independent breakage of single-stranded DNA, followed by passage and rejoining.. In terms of biological role, releases the supercoiling and torsional tension of DNA, which is introduced during the DNA replication and transcription, by transiently cleaving and rejoining one strand of the DNA duplex. Introduces a single-strand break via transesterification at a target site in duplex DNA. The scissile phosphodiester is attacked by the catalytic tyrosine of the enzyme, resulting in the formation of a DNA-(5'-phosphotyrosyl)-enzyme intermediate and the expulsion of a 3'-OH DNA strand. The free DNA strand then undergoes passage around the unbroken strand, thus removing DNA supercoils. Finally, in the religation step, the DNA 3'-OH attacks the covalent intermediate to expel the active-site tyrosine and restore the DNA phosphodiester backbone. The polypeptide is DNA topoisomerase 3 (Staphylococcus saprophyticus subsp. saprophyticus (strain ATCC 15305 / DSM 20229 / NCIMB 8711 / NCTC 7292 / S-41)).